Consider the following 324-residue polypeptide: Protoheme IX farnesyltransferase (324 aa).

The next 9 membrane-spanning stretches (helical) occupy residues Leu31–Val51, Phe56–Ile76, Val105–Leu125, Ser126–Lys146, Ile153–Gly173, Val181–Ile201, Pro214–Leu234, Leu238–Leu258, and Phe285–Thr305.

Belongs to the UbiA prenyltransferase family. Protoheme IX farnesyltransferase subfamily.

Its subcellular location is the cell inner membrane. The enzyme catalyses heme b + (2E,6E)-farnesyl diphosphate + H2O = Fe(II)-heme o + diphosphate. Its pathway is porphyrin-containing compound metabolism; heme O biosynthesis; heme O from protoheme: step 1/1. In terms of biological role, converts heme B (protoheme IX) to heme O by substitution of the vinyl group on carbon 2 of heme B porphyrin ring with a hydroxyethyl farnesyl side group. This is Protoheme IX farnesyltransferase from Acaryochloris marina (strain MBIC 11017).